The primary structure comprises 498 residues: Glycerol kinase (498 aa).

Thr-11 is an ADP binding site. Residues Thr-11, Ser-12, and Ser-13 each contribute to the ATP site. Residue Thr-11 participates in sn-glycerol 3-phosphate binding. Arg-15 provides a ligand contact to ADP. Residues Arg-81, Glu-82, Tyr-133, and Asp-242 each coordinate sn-glycerol 3-phosphate. Glycerol contacts are provided by Arg-81, Glu-82, Tyr-133, Asp-242, and Gln-243. The ADP site is built by Thr-264 and Gly-307. ATP-binding residues include Thr-264, Gly-307, Gln-311, and Gly-408. Residues Gly-408 and Asn-412 each contribute to the ADP site.

It belongs to the FGGY kinase family.

It catalyses the reaction glycerol + ATP = sn-glycerol 3-phosphate + ADP + H(+). Its pathway is polyol metabolism; glycerol degradation via glycerol kinase pathway; sn-glycerol 3-phosphate from glycerol: step 1/1. Inhibited by fructose 1,6-bisphosphate (FBP). Key enzyme in the regulation of glycerol uptake and metabolism. Catalyzes the phosphorylation of glycerol to yield sn-glycerol 3-phosphate. The sequence is that of Glycerol kinase from Ralstonia pickettii (strain 12J).